An 86-amino-acid chain; its full sequence is RNA-binding protein Hfq (86 aa).

The 62-residue stretch at 12–73 (DIFLNQVRKE…ISTITPQKPV (62 aa)) folds into the Sm domain.

Belongs to the Hfq family. In terms of assembly, homohexamer.

RNA chaperone that binds small regulatory RNA (sRNAs) and mRNAs to facilitate mRNA translational regulation in response to envelope stress, environmental stress and changes in metabolite concentrations. Also binds with high specificity to tRNAs. This Thermoanaerobacter pseudethanolicus (strain ATCC 33223 / 39E) (Clostridium thermohydrosulfuricum) protein is RNA-binding protein Hfq.